Consider the following 330-residue polypeptide: Aspartate--ammonia ligase (330 aa).

It belongs to the class-II aminoacyl-tRNA synthetase family. AsnA subfamily.

Its subcellular location is the cytoplasm. It catalyses the reaction L-aspartate + NH4(+) + ATP = L-asparagine + AMP + diphosphate + H(+). It functions in the pathway amino-acid biosynthesis; L-asparagine biosynthesis; L-asparagine from L-aspartate (ammonia route): step 1/1. This chain is Aspartate--ammonia ligase, found in Salmonella paratyphi A (strain ATCC 9150 / SARB42).